Consider the following 323-residue polypeptide: Beta-ketoacyl-[acyl-carrier-protein] synthase III (323 aa).

Catalysis depends on residues Cys-113 and His-250. The interval 251–255 is ACP-binding; sequence QANKR. The active site involves Asn-280.

It belongs to the thiolase-like superfamily. FabH family. In terms of assembly, homodimer.

Its subcellular location is the cytoplasm. The catalysed reaction is malonyl-[ACP] + acetyl-CoA + H(+) = 3-oxobutanoyl-[ACP] + CO2 + CoA. Its pathway is lipid metabolism; fatty acid biosynthesis. Functionally, catalyzes the condensation reaction of fatty acid synthesis by the addition to an acyl acceptor of two carbons from malonyl-ACP. Catalyzes the first condensation reaction which initiates fatty acid synthesis and may therefore play a role in governing the total rate of fatty acid production. Possesses both acetoacetyl-ACP synthase and acetyl transacylase activities. Its substrate specificity determines the biosynthesis of branched-chain and/or straight-chain of fatty acids. The protein is Beta-ketoacyl-[acyl-carrier-protein] synthase III of Brucella canis (strain ATCC 23365 / NCTC 10854 / RM-666).